Consider the following 530-residue polypeptide: Laccase-2 (530 aa).

A signal peptide spans Met-1–Ala-23. Plastocyanin-like domains are found at residues Asn-36–Glu-154 and Thr-167–Asn-311. N-linked (GlcNAc...) asparagine glycosylation occurs at Asn-82. Residues His-88 and His-90 each contribute to the Cu cation site. Intrachain disulfides connect Cys-109/Cys-520 and Cys-141/Cys-228. An N-linked (GlcNAc...) asparagine glycan is attached at Asn-120. Positions 133 and 135 each coordinate Cu cation. N-linked (GlcNAc...) asparagine glycans are attached at residues Asn-191, Asn-240, Asn-292, Asn-311, Asn-366, Asn-375, Asn-392, and Asn-412. One can recognise a Plastocyanin-like 3 domain in the interval Tyr-379–Gln-504. Cu cation contacts are provided by His-428, His-431, His-433, His-484, Cys-485, His-486, and His-490.

Belongs to the multicopper oxidase family. It depends on Cu cation as a cofactor.

It is found in the secreted. The enzyme catalyses 4 hydroquinone + O2 = 4 benzosemiquinone + 2 H2O. Inhibited by chloride ions. Inhibited by citrate. Inhibited by oxalate. Activated by acetate. Its function is as follows. In vitro, has activity towards 2,2'-azino-bis(3-ethylbenzthiazoline-6-sulfonic acid) (ABTS), 2,6-dimethoxy-phenol, and guaiacol. Although brown rot fungi preferentially degrade hemicellulose and cellulose, the enzyme may contribute to generating small amounts of lignin breakdown products required for catalytic reactions. This is Laccase-2 from Fomitopsis schrenkii (Brown rot fungus).